Consider the following 211-residue polypeptide: Eukaryotic translation initiation factor 4E (211 aa).

Belongs to the eukaryotic initiation factor 4E family. As to quaternary structure, eIF4F is a multi-subunit complex, the composition of which varies with external and internal environmental conditions. It is composed of at least eIF4A, eIF4E and eIF4G. eIF4E is also known to interact with other partners.

Functionally, recognizes and binds the 7-methylguanosine-containing mRNA cap during an early step in the initiation of protein synthesis and facilitates ribosome binding by inducing the unwinding of the mRNAs secondary structures. This Eremothecium gossypii (strain ATCC 10895 / CBS 109.51 / FGSC 9923 / NRRL Y-1056) (Yeast) protein is Eukaryotic translation initiation factor 4E (TIF45).